A 264-amino-acid polypeptide reads, in one-letter code: Spermidine/putrescine transport system permease protein PotC (264 aa).

Over 1 to 7 the chain is Cytoplasmic; the sequence is MIGRLLR. The helical transmembrane segment at 8-27 threads the bilayer; the sequence is GGFMTAIYAYLYIPIIILIV. Over 28-65 the chain is Periplasmic; the sequence is NSFNSSRFGINWQGFTTKWYSLLMNNDSLLQAAQHSLT. Residues 60–248 enclose the ABC transmembrane type-1 domain; that stretch reads AQHSLTMAVF…VLSLVMVIAS (189 aa). Residues 66–85 traverse the membrane as a helical segment; sequence MAVFSATFATLIGSLTAVAL. The Cytoplasmic segment spans residues 86-100; it reads YRYRFRGKPFVSGML. Residues 101 to 120 traverse the membrane as a helical segment; sequence FVVMMSPDIVMAISLLVLFM. The Periplasmic portion of the chain corresponds to 121–128; sequence LLGIQLGF. Residues 129–148 traverse the membrane as a helical segment; that stretch reads WSLLFSHITFCLPFVVVTVY. Over 149 to 176 the chain is Cytoplasmic; sequence SRLKGFDVRMLEAAKDLGASEFTILRKI. Residues 177 to 196 form a helical membrane-spanning segment; it reads ILPLAMPAVAAGWVLSFTLS. The Periplasmic portion of the chain corresponds to 197 to 231; it reads MDDVVVSSFVTGPSYEILPLKIYSMVKVGVSPEVN. The helical transmembrane segment at 232-251 threads the bilayer; the sequence is ALATILLVLSLVMVIASQLI. At 252–264 the chain is on the cytoplasmic side; the sequence is ARDKTKGNTGDVK.

It belongs to the binding-protein-dependent transport system permease family. CysTW subfamily.

Its subcellular location is the cell inner membrane. Required for the activity of the bacterial periplasmic transport system of putrescine and spermidine. In Escherichia coli O157:H7, this protein is Spermidine/putrescine transport system permease protein PotC (potC).